An 84-amino-acid polypeptide reads, in one-letter code: Cell division topological specificity factor (84 aa).

Belongs to the MinE family.

Functionally, prevents the cell division inhibition by proteins MinC and MinD at internal division sites while permitting inhibition at polar sites. This ensures cell division at the proper site by restricting the formation of a division septum at the midpoint of the long axis of the cell. In Pseudomonas aeruginosa (strain LESB58), this protein is Cell division topological specificity factor.